A 141-amino-acid polypeptide reads, in one-letter code: MAKKLVAVVKLQLPAGKATPAPPVGPALGQYGINIMAFVKEYNEKSASQAGSIVPVEISIYSDRSFVARLLTPPAADLLRKAAGVQKGSSNPKRNPVGTITRAQLRQIAQQKLPDMNANDIEAAERIIAGTARSMGIKIVD.

The protein belongs to the universal ribosomal protein uL11 family. In terms of assembly, part of the ribosomal stalk of the 50S ribosomal subunit. Interacts with L10 and the large rRNA to form the base of the stalk. L10 forms an elongated spine to which L12 dimers bind in a sequential fashion forming a multimeric L10(L12)X complex. One or more lysine residues are methylated.

Forms part of the ribosomal stalk which helps the ribosome interact with GTP-bound translation factors. The chain is Large ribosomal subunit protein uL11 from Chloroflexus aggregans (strain MD-66 / DSM 9485).